Reading from the N-terminus, the 476-residue chain is Alkaline phosphatase H (476 aa).

The first 26 residues, 1–26 (MTPGYPLALSLAVSMAVLGSALPAQA), serve as a signal peptide directing secretion. D77 is a Mg(2+) binding site. Residue D77 participates in Zn(2+) binding. S128 acts as the Phosphoserine intermediate in catalysis. A Phosphoserine modification is found at S128. Mg(2+) is bound by residues D179 and T181. The residue at position 206 (S206) is a Phosphoserine. A Mg(2+)-binding site is contributed by Q346. Positions 353, 357, 395, 396, and 438 each coordinate Zn(2+).

Belongs to the alkaline phosphatase family. Mg(2+) is required as a cofactor. Requires Zn(2+) as cofactor.

The protein localises to the secreted. The protein resides in the periplasm. It catalyses the reaction a phosphate monoester + H2O = an alcohol + phosphate. In terms of biological role, has only phosphomonoesterase activity. This is Alkaline phosphatase H (phoA) from Pseudomonas aeruginosa (strain UCBPP-PA14).